A 387-amino-acid chain; its full sequence is Phosphoglycerate kinase (387 aa).

Residues 21 to 23 (DLN), arginine 36, 59 to 62 (HLGR), arginine 113, and arginine 146 contribute to the substrate site. Residues lysine 197, glutamate 314, and 340–343 (GGDT) contribute to the ATP site.

It belongs to the phosphoglycerate kinase family. In terms of assembly, monomer.

Its subcellular location is the cytoplasm. The catalysed reaction is (2R)-3-phosphoglycerate + ATP = (2R)-3-phospho-glyceroyl phosphate + ADP. The protein operates within carbohydrate degradation; glycolysis; pyruvate from D-glyceraldehyde 3-phosphate: step 2/5. The polypeptide is Phosphoglycerate kinase (Proteus mirabilis (strain HI4320)).